The sequence spans 715 residues: Staphylocoagulase (715 aa).

A signal peptide spans 1-26 (MKKQIISLGALAVASSLFTWDNKADA). The span at 306–327 (KYGESETKSPVVKEENKVEDPQ) shows a compositional bias: basic and acidic residues. Disordered regions lie at residues 306 to 348 (KYGE…EETT) and 430 to 470 (QGTE…FNKT). Polar residues predominate over residues 431–443 (GTESTLKGIQGES). A run of 8 repeats spans residues 495–521 (ARPRFNKPSETNAYNVTTNQDGTVSYG), 522–548 (ARPTQNKASETNAYNVTTHANGQVSYG), 549–575 (ARPTQKKPSETNAYNVTTHANGQVSYG), 576–602 (ARPTYNKPSETNAYNVTTHGNGQVSYG), 603–629 (ARPTYKKPSKTNAYNVTTHANGQVSYG), 630–656 (ARPTQNKPSETNAYNVTTHANGQVSYG), 657–683 (ARPTQNKPSETNAYNVTTHGNGQVSYG), and 684–710 (ARPTYNKPSKTNAYNVTTHADGTATYG). The segment at 495-710 (ARPRFNKPSE…THADGTATYG (216 aa)) is 8 X 27 AA tandem repeats of A-R-P-[RT]-[FQY]-[NK]-K-[PA]-S-[EK]-T-N-A-Y-N-V-T-T-[NH]-[QAG]-[DN]-G-[TQ]-[VA]-[ST]-Y-G. The interval 674–697 (THGNGQVSYGARPTYNKPSKTNAY) is disordered.

It belongs to the staphylocoagulase family.

Functionally, staphylocoagulase is an extracellular protein which specifically forms a complex with human prothrombin. This complex named staphylothrombin can clot fibrinogen without any proteolytic cleavage of prothrombin. The protein is Staphylocoagulase of Staphylococcus aureus.